Here is a 258-residue protein sequence, read N- to C-terminus: C4b-binding protein beta chain (258 aa).

The first 15 residues, 1–15 (MLCLVVCCLIWLISA), serve as a signal peptide directing secretion. A Sushi 1; atypical; lacks a Cys domain is found at 18–75 (GSCSEPPPVNNSVFVGKETEEQILGIYLCIKGYHLVGKKSLVFDPSKEWNSTLPECLL). 5 N-linked (GlcNAc...) asparagine glycosylation sites follow: asparagine 27, asparagine 67, asparagine 89, asparagine 95, and asparagine 114. Intrachain disulfides connect cysteine 46–cysteine 73, cysteine 78–cysteine 118, cysteine 104–cysteine 131, cysteine 136–cysteine 176, and cysteine 162–cysteine 188. Sushi domains follow at residues 76 to 133 (GHCP…ICRS) and 134 to 190 (RDCE…TCES). A glycan (N-linked (GlcNAc...) asparagine) is linked at asparagine 218.

Disulfide-linked complex of alpha and beta chains.

It localises to the secreted. In terms of biological role, controls the classical pathway of complement activation. It binds as a cofactor to C3b/C4b inactivator (C3bINA), which then hydrolyzes the complement fragment C4b. It also accelerates the degradation of the C4bC2a complex (C3 convertase) by dissociating the complement fragment C2a. It also interacts with anticoagulant protein S and with serum amyloid P component. The sequence is that of C4b-binding protein beta chain (C4bpb) from Rattus norvegicus (Rat).